The primary structure comprises 335 residues: Putative SWIB domain-containing protein R508 (335 aa).

The span at 1-12 shows a compositional bias: basic residues; the sequence is MSKRVTSSKKSK. The tract at residues 1-182 is disordered; sequence MSKRVTSSKK…NKKSPKKLLN (182 aa). Residues 24–33 show a composition bias toward low complexity; that stretch reads KNLSKTSKSV. The span at 60–75 shows a compositional bias: polar residues; that stretch reads NIGGSKSSRTYNSEGS. Residues 83–109 show a composition bias toward basic and acidic residues; that stretch reads SSKDSKVIKKNKQKVESSDSEKHSENK. The segment covering 110–126 has biased composition (basic residues); it reads SHKKSSKSSSISRKKPI. Residues 163 to 173 show a composition bias toward basic and acidic residues; sequence KGEDNNDEKQN. The stretch at 181-217 forms a coiled coil; it reads LNEKKISSESFDDKLNELREELRENYIRQKKIMNDIK. The region spanning 244 to 326 is the SWIB/MDM2 domain; the sequence is GFNKPQTVPQ…QTWLKKVYNE (83 aa).

The protein is Putative SWIB domain-containing protein R508 of Acanthamoeba polyphaga mimivirus (APMV).